The primary structure comprises 492 residues: Bifunctional purine biosynthesis protein PurH (492 aa).

One can recognise an MGS-like domain in the interval 1–144 (MKKAILSVSN…KNFKHVTTIV (144 aa)).

It belongs to the PurH family.

The enzyme catalyses (6R)-10-formyltetrahydrofolate + 5-amino-1-(5-phospho-beta-D-ribosyl)imidazole-4-carboxamide = 5-formamido-1-(5-phospho-D-ribosyl)imidazole-4-carboxamide + (6S)-5,6,7,8-tetrahydrofolate. It carries out the reaction IMP + H2O = 5-formamido-1-(5-phospho-D-ribosyl)imidazole-4-carboxamide. Its pathway is purine metabolism; IMP biosynthesis via de novo pathway; 5-formamido-1-(5-phospho-D-ribosyl)imidazole-4-carboxamide from 5-amino-1-(5-phospho-D-ribosyl)imidazole-4-carboxamide (10-formyl THF route): step 1/1. The protein operates within purine metabolism; IMP biosynthesis via de novo pathway; IMP from 5-formamido-1-(5-phospho-D-ribosyl)imidazole-4-carboxamide: step 1/1. The protein is Bifunctional purine biosynthesis protein PurH of Staphylococcus haemolyticus (strain JCSC1435).